The following is a 473-amino-acid chain: Tryptophanase (473 aa).

K270 carries the N6-(pyridoxal phosphate)lysine modification.

Belongs to the beta-eliminating lyase family. In terms of assembly, homotetramer. Pyridoxal 5'-phosphate serves as cofactor.

It carries out the reaction L-tryptophan + H2O = indole + pyruvate + NH4(+). The protein operates within amino-acid degradation; L-tryptophan degradation via pyruvate pathway; indole and pyruvate from L-tryptophan: step 1/1. The sequence is that of Tryptophanase from Vibrio vulnificus (strain CMCP6).